The primary structure comprises 84 residues: Sec-independent protein translocase protein TatA (84 aa).

A helical membrane pass occupies residues 1–21; that stretch reads MPNLGVPELLIIALVIFLLFG. The span at 42–57 shows a compositional bias: basic and acidic residues; sequence EMDEMKTDGDKKELAE. The interval 42 to 84 is disordered; sequence EMDEMKTDGDKKELAEKQAPTAEQQQAQDLAQPKSEQPNEHNA. A compositionally biased stretch (polar residues) spans 62-77; sequence TAEQQQAQDLAQPKSE.

The protein belongs to the TatA/E family. The Tat system comprises two distinct complexes: a TatABC complex, containing multiple copies of TatA, TatB and TatC subunits, and a separate TatA complex, containing only TatA subunits. Substrates initially bind to the TatABC complex, which probably triggers association of the separate TatA complex to form the active translocon.

Its subcellular location is the cell membrane. Its function is as follows. Part of the twin-arginine translocation (Tat) system that transports large folded proteins containing a characteristic twin-arginine motif in their signal peptide across membranes. TatA could form the protein-conducting channel of the Tat system. The chain is Sec-independent protein translocase protein TatA from Corynebacterium jeikeium (strain K411).